Consider the following 241-residue polypeptide: Pyridoxine 5'-phosphate synthase (241 aa).

Asn7 contacts 3-amino-2-oxopropyl phosphate. 1-deoxy-D-xylulose 5-phosphate is bound at residue 9 to 10; that stretch reads DH. Arg18 lines the 3-amino-2-oxopropyl phosphate pocket. Residue His43 is the Proton acceptor of the active site. 1-deoxy-D-xylulose 5-phosphate is bound by residues Arg45 and His50. Glu70 functions as the Proton acceptor in the catalytic mechanism. Thr100 contributes to the 1-deoxy-D-xylulose 5-phosphate binding site. His191 functions as the Proton donor in the catalytic mechanism. 3-amino-2-oxopropyl phosphate-binding positions include Ser192 and 213–214; that span reads GH.

It belongs to the PNP synthase family. In terms of assembly, homooctamer; tetramer of dimers.

The protein resides in the cytoplasm. The enzyme catalyses 3-amino-2-oxopropyl phosphate + 1-deoxy-D-xylulose 5-phosphate = pyridoxine 5'-phosphate + phosphate + 2 H2O + H(+). It participates in cofactor biosynthesis; pyridoxine 5'-phosphate biosynthesis; pyridoxine 5'-phosphate from D-erythrose 4-phosphate: step 5/5. Functionally, catalyzes the complicated ring closure reaction between the two acyclic compounds 1-deoxy-D-xylulose-5-phosphate (DXP) and 3-amino-2-oxopropyl phosphate (1-amino-acetone-3-phosphate or AAP) to form pyridoxine 5'-phosphate (PNP) and inorganic phosphate. This is Pyridoxine 5'-phosphate synthase from Nitrosomonas eutropha (strain DSM 101675 / C91 / Nm57).